A 308-amino-acid chain; its full sequence is 4-hydroxy-tetrahydrodipicolinate synthase (308 aa).

Threonine 56 serves as a coordination point for pyruvate. Tyrosine 144 acts as the Proton donor/acceptor in catalysis. The Schiff-base intermediate with substrate role is filled by lysine 172. Residue valine 212 participates in pyruvate binding.

The protein belongs to the DapA family. As to quaternary structure, homotetramer; dimer of dimers.

The protein localises to the cytoplasm. The catalysed reaction is L-aspartate 4-semialdehyde + pyruvate = (2S,4S)-4-hydroxy-2,3,4,5-tetrahydrodipicolinate + H2O + H(+). Its pathway is amino-acid biosynthesis; L-lysine biosynthesis via DAP pathway; (S)-tetrahydrodipicolinate from L-aspartate: step 3/4. Its function is as follows. Catalyzes the condensation of (S)-aspartate-beta-semialdehyde [(S)-ASA] and pyruvate to 4-hydroxy-tetrahydrodipicolinate (HTPA). In Kineococcus radiotolerans (strain ATCC BAA-149 / DSM 14245 / SRS30216), this protein is 4-hydroxy-tetrahydrodipicolinate synthase.